A 149-amino-acid chain; its full sequence is MKYQQLENLECGWKWQYLINKWKDGEPVTRYIDKSEIEAAVQKLRAIEHEPTHVLSWIEEHMSSELDNKLKQAIRAKRKRHFNAEQIHTRKKSIDLDYRVWEKLSLKANELGCTLSDAIEYLLSEASRSEKASKTVNSLKEDLSRLLAE.

It belongs to the MatP family. In terms of assembly, homodimer.

The protein resides in the cytoplasm. Functionally, required for spatial organization of the terminus region of the chromosome (Ter macrodomain) during the cell cycle. Prevents early segregation of duplicated Ter macrodomains during cell division. Binds specifically to matS, which is a 13 bp signature motif repeated within the Ter macrodomain. The protein is Macrodomain Ter protein of Vibrio cholerae serotype O1 (strain ATCC 39315 / El Tor Inaba N16961).